An 87-amino-acid polypeptide reads, in one-letter code: Cytochrome c6 (87 aa).

Residues cysteine 10, cysteine 13, histidine 14, and methionine 56 each contribute to the heme c site.

The protein belongs to the cytochrome c family. PetJ subfamily. Monomer. Binds 1 heme c group covalently per subunit.

The protein localises to the plastid. It localises to the chloroplast thylakoid lumen. In terms of biological role, functions as an electron carrier between membrane-bound cytochrome b6-f and photosystem I in oxygenic photosynthesis. This chain is Cytochrome c6 (petJ), found in Euglena viridis (Cercaria viridis).